A 430-amino-acid chain; its full sequence is Enolase (430 aa).

Glutamine 163 lines the (2R)-2-phosphoglycerate pocket. Glutamate 205 acts as the Proton donor in catalysis. 3 residues coordinate Mg(2+): aspartate 242, glutamate 287, and aspartate 314. Residues lysine 339, arginine 368, serine 369, and lysine 390 each coordinate (2R)-2-phosphoglycerate. Lysine 339 serves as the catalytic Proton acceptor.

It belongs to the enolase family. Mg(2+) serves as cofactor.

The protein resides in the cytoplasm. It localises to the secreted. The protein localises to the cell surface. It carries out the reaction (2R)-2-phosphoglycerate = phosphoenolpyruvate + H2O. Its pathway is carbohydrate degradation; glycolysis; pyruvate from D-glyceraldehyde 3-phosphate: step 4/5. Catalyzes the reversible conversion of 2-phosphoglycerate (2-PG) into phosphoenolpyruvate (PEP). It is essential for the degradation of carbohydrates via glycolysis. The sequence is that of Enolase from Clostridioides difficile (strain 630) (Peptoclostridium difficile).